The sequence spans 786 residues: LPS-assembly protein LptD (786 aa).

The N-terminal stretch at 1–39 (MPPKPLFPNVFPGDGAPRKRRLALALLAVPGLVPAVSYA) is a signal peptide.

The protein belongs to the LptD family. As to quaternary structure, component of the lipopolysaccharide transport and assembly complex. Interacts with LptE and LptA.

It is found in the cell outer membrane. In terms of biological role, together with LptE, is involved in the assembly of lipopolysaccharide (LPS) at the surface of the outer membrane. The protein is LPS-assembly protein LptD of Burkholderia ambifaria (strain ATCC BAA-244 / DSM 16087 / CCUG 44356 / LMG 19182 / AMMD) (Burkholderia cepacia (strain AMMD)).